Here is a 351-residue protein sequence, read N- to C-terminus: Transaldolase (351 aa).

Lys138 serves as the catalytic Schiff-base intermediate with substrate.

This sequence belongs to the transaldolase family. Type 2 subfamily.

It localises to the cytoplasm. It carries out the reaction D-sedoheptulose 7-phosphate + D-glyceraldehyde 3-phosphate = D-erythrose 4-phosphate + beta-D-fructose 6-phosphate. It functions in the pathway carbohydrate degradation; pentose phosphate pathway; D-glyceraldehyde 3-phosphate and beta-D-fructose 6-phosphate from D-ribose 5-phosphate and D-xylulose 5-phosphate (non-oxidative stage): step 2/3. In terms of biological role, transaldolase is important for the balance of metabolites in the pentose-phosphate pathway. The polypeptide is Transaldolase (Neisseria meningitidis serogroup C / serotype 2a (strain ATCC 700532 / DSM 15464 / FAM18)).